We begin with the raw amino-acid sequence, 409 residues long: Argininosuccinate synthase (409 aa).

Residues 8–16 (AYSGGLDTS) and Ala34 each bind ATP. Tyr85 serves as a coordination point for L-citrulline. Position 115 (Gly115) interacts with ATP. Residues Thr117, Asn121, and Asp122 each coordinate L-aspartate. Asn121 is a binding site for L-citrulline. L-citrulline-binding residues include Arg125, Ser178, Ser187, Glu268, and Tyr280.

The protein belongs to the argininosuccinate synthase family. Type 1 subfamily. As to quaternary structure, homotetramer.

The protein localises to the cytoplasm. It catalyses the reaction L-citrulline + L-aspartate + ATP = 2-(N(omega)-L-arginino)succinate + AMP + diphosphate + H(+). It participates in amino-acid biosynthesis; L-arginine biosynthesis; L-arginine from L-ornithine and carbamoyl phosphate: step 2/3. The protein is Argininosuccinate synthase of Thermotoga sp. (strain RQ2).